A 217-amino-acid polypeptide reads, in one-letter code: MIKVAPSILSADFAALGNEIKDVEKGGADCIHIDVMDGHFVPNITIGPLIVEAVRPVTDLPLDVHLMIEEPDRYIPAFAKAGADILSVHAEACPHLHRTIQLIKEQGVKAGVVLNPHTPVQVIEHVFDDLDLVLLMTVNPGFGGQKFIHSVLPKIKEVKRMADEKGKKDLLIEVDGGVNKETAPLVIEAGANLLVAGSAVYGQSDRKKAISEIRGSK.

Position 7 (Ser-7) interacts with substrate. A divalent metal cation is bound by residues His-32, Asp-34, and His-65. Residue Asp-34 is the Proton acceptor of the active site. Substrate is bound by residues His-65, 141-144 (GFGG), 175-177 (DGG), and 197-198 (GS). Residue Asp-175 participates in a divalent metal cation binding. Asp-175 functions as the Proton donor in the catalytic mechanism.

Belongs to the ribulose-phosphate 3-epimerase family. Requires a divalent metal cation as cofactor.

It catalyses the reaction D-ribulose 5-phosphate = D-xylulose 5-phosphate. It participates in carbohydrate degradation. Functionally, catalyzes the reversible epimerization of D-ribulose 5-phosphate to D-xylulose 5-phosphate. The sequence is that of Ribulose-phosphate 3-epimerase from Bacillus subtilis (strain 168).